Consider the following 380-residue polypeptide: Queuine tRNA-ribosyltransferase (380 aa).

Aspartate 96 functions as the Proton acceptor in the catalytic mechanism. Residues 96-100, aspartate 150, glutamine 193, and glycine 220 contribute to the substrate site; that span reads DSGGF. The RNA binding stretch occupies residues 251-257; the sequence is GVGAPDS. The active-site Nucleophile is aspartate 270. The tract at residues 275 to 279 is RNA binding; important for wobble base 34 recognition; that stretch reads TRIAR. Zn(2+) contacts are provided by cysteine 308, cysteine 310, cysteine 313, and histidine 339.

This sequence belongs to the queuine tRNA-ribosyltransferase family. As to quaternary structure, homodimer. Within each dimer, one monomer is responsible for RNA recognition and catalysis, while the other monomer binds to the replacement base PreQ1. The cofactor is Zn(2+).

The enzyme catalyses 7-aminomethyl-7-carbaguanine + guanosine(34) in tRNA = 7-aminomethyl-7-carbaguanosine(34) in tRNA + guanine. The protein operates within tRNA modification; tRNA-queuosine biosynthesis. In terms of biological role, catalyzes the base-exchange of a guanine (G) residue with the queuine precursor 7-aminomethyl-7-deazaguanine (PreQ1) at position 34 (anticodon wobble position) in tRNAs with GU(N) anticodons (tRNA-Asp, -Asn, -His and -Tyr). Catalysis occurs through a double-displacement mechanism. The nucleophile active site attacks the C1' of nucleotide 34 to detach the guanine base from the RNA, forming a covalent enzyme-RNA intermediate. The proton acceptor active site deprotonates the incoming PreQ1, allowing a nucleophilic attack on the C1' of the ribose to form the product. After dissociation, two additional enzymatic reactions on the tRNA convert PreQ1 to queuine (Q), resulting in the hypermodified nucleoside queuosine (7-(((4,5-cis-dihydroxy-2-cyclopenten-1-yl)amino)methyl)-7-deazaguanosine). The polypeptide is Queuine tRNA-ribosyltransferase (Streptococcus suis (strain 98HAH33)).